The primary structure comprises 482 residues: Protein DETOXIFICATION 13 (482 aa).

12 helical membrane-spanning segments follow: residues 39–59, 77–97, 124–144, 159–179, 188–208, 218–238, 268–288, 297–317, 337–357, 381–401, 416–436, and 439–459; these read LICFAAPMAAVVIAQFMLQII, LASSFCNVTGFSFIVGLSCAL, LALVCLPLTLIWLNMETLLVF, AACLIPGLFAYAVLQPLTRYF, LLITSCFVFCLHVPLCWLLVY, ALALSFSNCLYTIILGSLMCF, AAMICLEWWSYELIILLSGLL, VLSVCLQTTATVYSIHLAIAA, IVVYAAMSLAVVEILILSTSL, MAPLVSISLILDGLQGVLSGI, LGAFYLWGIPIAASLAFWIHL, and VGLWIGIQAGAVLQTLLLTLV.

The protein belongs to the multi antimicrobial extrusion (MATE) (TC 2.A.66.1) family.

It localises to the membrane. The sequence is that of Protein DETOXIFICATION 13 from Arabidopsis thaliana (Mouse-ear cress).